Reading from the N-terminus, the 241-residue chain is Proteasome subunit alpha type-5 (241 aa).

This sequence belongs to the peptidase T1A family. In terms of assembly, the 26S proteasome consists of a 20S proteasome core and two 19S regulatory subunits. The 20S proteasome core is composed of 28 subunits that are arranged in four stacked rings, resulting in a barrel-shaped structure. The two end rings are each formed by seven alpha subunits, and the two central rings are each formed by seven beta subunits. The catalytic chamber with the active sites is on the inside of the barrel.

It is found in the cytoplasm. It localises to the nucleus. Functionally, the proteasome is a multicatalytic proteinase complex which is characterized by its ability to cleave peptides with Arg, Phe, Tyr, Leu, and Glu adjacent to the leaving group at neutral or slightly basic pH. The proteasome has an ATP-dependent proteolytic activity. The polypeptide is Proteasome subunit alpha type-5 (psmA5) (Dictyostelium discoideum (Social amoeba)).